A 241-amino-acid polypeptide reads, in one-letter code: Ribonuclease PH (241 aa).

Residues Arg-87 and 125 to 127 (GTR) contribute to the phosphate site.

Belongs to the RNase PH family. Homohexameric ring arranged as a trimer of dimers.

It carries out the reaction tRNA(n+1) + phosphate = tRNA(n) + a ribonucleoside 5'-diphosphate. Functionally, phosphorolytic 3'-5' exoribonuclease that plays an important role in tRNA 3'-end maturation. Removes nucleotide residues following the 3'-CCA terminus of tRNAs; can also add nucleotides to the ends of RNA molecules by using nucleoside diphosphates as substrates, but this may not be physiologically important. Probably plays a role in initiation of 16S rRNA degradation (leading to ribosome degradation) during starvation. The chain is Ribonuclease PH from Salinispora arenicola (strain CNS-205).